The sequence spans 235 residues: MKLSIGIFFGGLFGALGILIYLVAFGSDYWLLAKEIEKCSENQETGDNATHSVLLHHEGFFWRCWFNHAEEENSNTMENFWFTNQAPTKNCTHAYLSPFPQNRDNSNSTSYHSALVYRGFWNIFMLLGVVTAVIGGFLIICAAPFTNHRIYKAGGGLFITSGILFALVVVMHVFWVQSVSDIKGYTDTRQQDCSQFTVYVSFGWSFMLAPFGIFFCLFAGMLFLLVGHTIHVHTK.

Positions 1-33 are cleaved as a signal peptide; sequence MKLSIGIFFGGLFGALGILIYLVAFGSDYWLLA. Residues 34-122 are Extracellular-facing; that stretch reads KEIEKCSENQ…SALVYRGFWN (89 aa). Residues N48, N90, and N107 are each glycosylated (N-linked (GlcNAc...) asparagine). The helical transmembrane segment at 123–143 threads the bilayer; it reads IFMLLGVVTAVIGGFLIICAA. Residues 144-155 are Cytoplasmic-facing; the sequence is PFTNHRIYKAGG. The helical transmembrane segment at 156 to 176 threads the bilayer; it reads GLFITSGILFALVVVMHVFWV. Topologically, residues 177 to 205 are extracellular; it reads QSVSDIKGYTDTRQQDCSQFTVYVSFGWS. A helical membrane pass occupies residues 206 to 226; sequence FMLAPFGIFFCLFAGMLFLLV. The Cytoplasmic segment spans residues 227–235; that stretch reads GHTIHVHTK.

This sequence belongs to the TMEM182 family.

It is found in the cell membrane. May negatively regulate myogenesis and skeletal muscle regeneration. The protein is Transmembrane protein 182 (tmem182) of Xenopus tropicalis (Western clawed frog).